A 205-amino-acid chain; its full sequence is SREBP regulating gene protein (205 aa).

Over 1-16 the chain is Cytoplasmic; the sequence is MVNLAAMVWRRLLRKR. The helical transmembrane segment at 17 to 35 threads the bilayer; sequence WVLALVFGLSLVYFLTSTF. Residues 36-205 are Lumenal-facing; it reads KQEERAVRDR…GESPPELFPA (170 aa). Asparagine 67 carries N-linked (GlcNAc...) asparagine glycosylation.

Belongs to the SPRING family. Interacts with SCAP.

It localises to the golgi apparatus membrane. Its function is as follows. Positively regulates hepatic SREBP signaling pathway by modulating the proper localization of SCAP (SREBP cleavage-activating protein) to the endoplasmic reticulum, thereby controlling the level of functional SCAP. This is SREBP regulating gene protein from Bos taurus (Bovine).